Reading from the N-terminus, the 200-residue chain is Adenylyl-sulfate kinase (200 aa).

Gly35–Ser42 contacts ATP. Ser109 (phosphoserine intermediate) is an active-site residue.

The protein belongs to the APS kinase family.

The enzyme catalyses adenosine 5'-phosphosulfate + ATP = 3'-phosphoadenylyl sulfate + ADP + H(+). The protein operates within sulfur metabolism; hydrogen sulfide biosynthesis; sulfite from sulfate: step 2/3. Catalyzes the synthesis of activated sulfate. This Thermodesulfovibrio yellowstonii (strain ATCC 51303 / DSM 11347 / YP87) protein is Adenylyl-sulfate kinase.